We begin with the raw amino-acid sequence, 556 residues long: MSPLPIFHRLPHATFSSFLLSLSQAGSSKTSVAFLNAFKSEDIIARIGLWWQLIRAVVVVPVFKFLVLLCLVMSVMFFVEVMYMGIVVLYVKLFKRKPEKFYKWEAMEDDVECGSASYPMVLVQIPMYNEKEVCEQSIAAACKISWPSNRIIIQVLDDSTDPASKELVKKECDRWSKEGVNITFEIRDNRNGYKAGALREGMRHSYVKQCDYVAIFDADFQPDPDFLHRTVPFLIHNPKLALVQGRWEFVNAGQCMMTRLQEMSLSYHFTIEQQVGSSTFAFFGFNGTAGVWRISALNESGGWNDQTTVEDMDLAVRATLRGWKFLYIDDLKVKSELPCSFKALRSQQHRWTCGPANLLRKMAGQIIRSENVSLWKKWYMLYSFFFMRKIVAHILTFCFYCVILPATVLFPEVTVPKWAAFYLPSLITLLIAIGRLRSIHLLAFWVLFENAMSLLRAKALVMGLFETGRVQEWVVTEKLGDTLKTKLIPQVPNVRFRERVHLLELLVGAYLLFCGIYDIVYGKNTLYVYLLFQSVAFFVVGFGFVGKYVPASSYLA.

The helical transmembrane segment at 58 to 78 (VVVPVFKFLVLLCLVMSVMFF) threads the bilayer. Residue Asp-158 is part of the active site. The substrate site is built by Asp-217 and Asp-219. The active site involves Asp-311. 4 helical membrane-spanning segments follow: residues 390 to 410 (IVAHILTFCFYCVILPATVLF), 426 to 448 (LITLLIAIGRLRSIHLLAFWVLF), 502 to 522 (LLELLVGAYLLFCGIYDIVYG), and 526 to 546 (LYVYLLFQSVAFFVVGFGFVG).

The protein belongs to the glycosyltransferase 2 family. Plant cellulose synthase-like A subfamily. In terms of tissue distribution, ubiquitous.

It localises to the golgi apparatus membrane. The catalysed reaction is GDP-mannose + (glucomannan)n = GDP + (glucomannan)n+1.. In terms of biological role, probable mannan synthase which consists of a 4-beta-mannosyltransferase activity on mannan using GDP-mannose. The beta-1,4-mannan product is the backbone for galactomannan synthesis by galactomannan galactosyltransferase. Galactomannan is a noncellulosic polysaccharides of plant cell wall. Required for synthesis of a cell wall polysaccharide essential for pollen tube growth, for cell wall structure, or for signaling during plant embryo development. The sequence is that of Glucomannan 4-beta-mannosyltransferase 7 from Arabidopsis thaliana (Mouse-ear cress).